Here is a 236-residue protein sequence, read N- to C-terminus: Small ribosomal subunit protein uS2c (236 aa).

It belongs to the universal ribosomal protein uS2 family.

The protein localises to the plastid. The protein resides in the chloroplast. In Ceratophyllum demersum (Rigid hornwort), this protein is Small ribosomal subunit protein uS2c (rps2).